The following is a 549-amino-acid chain: Frizzled-7-A (549 aa).

An N-terminal signal peptide occupies residues 1–22 (MSSTVSLLFCCLFLQLCPSAQQ). The Extracellular portion of the chain corresponds to 23 to 231 (YHGEKGISVP…EEEVRFARLW (209 aa)). The FZ domain occupies 32 to 151 (PDHGFCQPIS…HGAGEICVGQ (120 aa)). 5 disulfide bridges follow: cysteine 37-cysteine 98, cysteine 45-cysteine 91, cysteine 82-cysteine 119, cysteine 108-cysteine 148, and cysteine 112-cysteine 136. The N-linked (GlcNAc...) asparagine glycan is linked to asparagine 51. N-linked (GlcNAc...) asparagine glycosylation is present at asparagine 152. A helical transmembrane segment spans residues 232-252 (VGIWAILCCISTLFTVLTYLV). The Cytoplasmic portion of the chain corresponds to 253–263 (DMRRFSYPERP). Residues 264-284 (IIFLSGCYFMVAVAYTAGFLL) traverse the membrane as a helical segment. Topologically, residues 285–311 (EERAVCVERFSEDSYRTVAQGTKKEGC) are extracellular. A helical membrane pass occupies residues 312–332 (TILFMILYFFGMASSIWWVIL). Residues 333–354 (SLTWFLSAGMKWGHEAIEANSQ) are Cytoplasmic-facing. The helical transmembrane segment at 355 to 375 (YFHLAAWAVPAVKTITILAMG) threads the bilayer. Over 376–398 (QVDGDVLSGVCYVGINSVDSLRG) the chain is Extracellular. The helical transmembrane segment at 399–419 (FVLAPLFVYLFIGTSFLLAGF) threads the bilayer. Residues 420 to 445 (VSLFRIRTIMKHDGTKTEKLEKLMVR) are Cytoplasmic-facing. A helical transmembrane segment spans residues 446–466 (IGVFSVMYTVPATIVLACYFY). Topologically, residues 467–503 (EQAFRDTWEKTWLVQTCKGYAVPCPNYNFAPMSPDFT) are extracellular. Residues 504 to 524 (VFMIKYLMTMIVGITSSFWIW) traverse the membrane as a helical segment. At 525–549 (SGKTLQSWRRFYHRLSNGSKGETAV) the chain is on the cytoplasmic side. The short motif at 527 to 532 (KTLQSW) is the Lys-Thr-X-X-X-Trp motif, mediates interaction with the PDZ domain of Dvl family members element. A PDZ-binding motif is present at residues 547-549 (TAV).

It belongs to the G-protein coupled receptor Fz/Smo family. Interacts with wnt11 and sdc4. The extracellular domain interacts with the extracellular domain of pcdh8/papc. As to expression, expressed in the animal region of cleavage stage embryos. During gastrulation, broadly expressed on the dorsal side of the embryo in deep mesodermal cells surrounding the blastopore lip and in presumptive anterior neuroectoderm. During neurulation, becomes progressively more restricted to the dorsal epidermis, neural plate, and neural tube. Expressed in the cranial neural crest of neurulae and tailbud embryos as well as the pronephros of tailbud embryos. Localized to the brain of neurulae, tailbud embryos and tadpoles. In tadpoles, strongly expressed in the eye and developing heart.

It localises to the cell membrane. The protein resides in the endosome membrane. Receptor for Wnt proteins. Acts in both canonical and non-canonical Wnt pathways. Although different papers report differing Wnt preferences, wnt5a, wnt8b and wnt11 have been proposed as synergists. In the canonical Wnt pathway, acts via beta-catenin to promote the expression of the dorsal genes siamois, twin and nodal3 and to establish the dorsal axis of the embryo and induce dorsal mesoderm formation. In a non-canonical Wnt/planar cell polarity (PCP) pathway, acts with sdc4 and dvl2/dsh to regulate convergent extension cell movements during gastrulation. Triggers phosphorylation of dvl2/dsh and its translocation to the plasma membrane. In a third branch of Wnt signaling, acts in a non-canonical pathway via trimeric G proteins, and independently of dvl2/dsh, to recruit protein kinase C (PKC) to the membrane and thus activate PKC. PKC signaling controls cell sorting and tissue separation during gastrulation. The polypeptide is Frizzled-7-A (fzd7-a) (Xenopus laevis (African clawed frog)).